The following is a 334-amino-acid chain: E3 ubiquitin-protein ligase ATL4 (334 aa).

Residues 1–20 form a disordered region; the sequence is MESLINPSHGGGNYDSHSSS. Residues 28-48 traverse the membrane as a helical segment; the sequence is VLVIILILLMTLLISVSICFL. An RING-type; atypical zinc finger spans residues 117–159; sequence CAVCLSKFEPEDQLRLLPLCCHAFHADCIDIWLVSNQTCPLCR.

It belongs to the RING-type zinc finger family. ATL subfamily.

It localises to the membrane. The catalysed reaction is S-ubiquitinyl-[E2 ubiquitin-conjugating enzyme]-L-cysteine + [acceptor protein]-L-lysine = [E2 ubiquitin-conjugating enzyme]-L-cysteine + N(6)-ubiquitinyl-[acceptor protein]-L-lysine.. It functions in the pathway protein modification; protein ubiquitination. In terms of biological role, E3 ubiquitin-protein ligase able to catalyze polyubiquitination with ubiquitin-conjugating enzyme E2 UBC8 in vitro. The protein is E3 ubiquitin-protein ligase ATL4 of Arabidopsis thaliana (Mouse-ear cress).